We begin with the raw amino-acid sequence, 344 residues long: GTP 3',8-cyclase (344 aa).

The Radical SAM core domain maps to 19–239 (PFGRTIDYLR…ANYTLTDLPD (221 aa)). Arg28 is a GTP binding site. [4Fe-4S] cluster-binding residues include Cys35 and Cys39. Tyr41 is an S-adenosyl-L-methionine binding site. [4Fe-4S] cluster is bound at residue Cys42. Arg77 is a GTP binding site. S-adenosyl-L-methionine is bound at residue Gly81. GTP is bound at residue Thr111. Ser135 provides a ligand contact to S-adenosyl-L-methionine. Lys171 is a GTP binding site. Met205 provides a ligand contact to S-adenosyl-L-methionine. [4Fe-4S] cluster contacts are provided by Cys268 and Cys271. 273–275 (RVR) provides a ligand contact to GTP. Cys285 is a binding site for [4Fe-4S] cluster.

It belongs to the radical SAM superfamily. MoaA family. As to quaternary structure, monomer and homodimer. The cofactor is [4Fe-4S] cluster.

The enzyme catalyses GTP + AH2 + S-adenosyl-L-methionine = (8S)-3',8-cyclo-7,8-dihydroguanosine 5'-triphosphate + 5'-deoxyadenosine + L-methionine + A + H(+). It functions in the pathway cofactor biosynthesis; molybdopterin biosynthesis. Its function is as follows. Catalyzes the cyclization of GTP to (8S)-3',8-cyclo-7,8-dihydroguanosine 5'-triphosphate. The protein is GTP 3',8-cyclase of Rhodopseudomonas palustris (strain ATCC BAA-98 / CGA009).